The following is a 192-amino-acid chain: Phosphoheptose isomerase (192 aa).

The SIS domain occupies 37–192 (LADSFKQEGK…IQLVEKEMAK (156 aa)). Position 52–54 (52–54 (NGG)) interacts with substrate. Zn(2+)-binding residues include histidine 61 and glutamate 65. Residues glutamate 65, 93 to 94 (ND), 119 to 121 (STS), serine 124, and glutamine 172 contribute to the substrate site. Glutamine 172 and histidine 180 together coordinate Zn(2+).

Belongs to the SIS family. GmhA subfamily. Homotetramer. Requires Zn(2+) as cofactor.

It is found in the cytoplasm. The catalysed reaction is 2 D-sedoheptulose 7-phosphate = D-glycero-alpha-D-manno-heptose 7-phosphate + D-glycero-beta-D-manno-heptose 7-phosphate. The protein operates within carbohydrate biosynthesis; D-glycero-D-manno-heptose 7-phosphate biosynthesis; D-glycero-alpha-D-manno-heptose 7-phosphate and D-glycero-beta-D-manno-heptose 7-phosphate from sedoheptulose 7-phosphate: step 1/1. Catalyzes the isomerization of sedoheptulose 7-phosphate in D-glycero-D-manno-heptose 7-phosphate. This Aeromonas salmonicida (strain A449) protein is Phosphoheptose isomerase.